The chain runs to 353 residues: Guanine nucleotide-binding protein G(q) subunit alpha (353 aa).

2 S-palmitoyl cysteine lipidation sites follow: Cys3 and Cys4. The G-alpha domain maps to 32 to 353 (RELKLLLLGT…QLNLKEYNLV (322 aa)). Positions 35-48 (KLLLLGTGESGKST) are G1 motif. GTP-binding positions include 40–47 (GTGESGKS), 174–180 (LRVRAPT), 199–203 (DVGGQ), 268–271 (NKKD), and Ala325. Mg(2+) contacts are provided by Ser47 and Thr180. The tract at residues 172 to 180 (DILRVRAPT) is G2 motif. The segment at 195-204 (FRMVDVGGQR) is G3 motif. A G4 motif region spans residues 264 to 271 (ILFLNKKD). The G5 motif stretch occupies residues 323–328 (TCATDT).

The protein belongs to the G-alpha family. G(q) subfamily. In terms of assembly, g proteins are composed of 3 units; alpha, beta and gamma. The alpha chain contains the guanine nucleotide binding site.

In terms of biological role, guanine nucleotide-binding proteins (G proteins) are involved as modulators or transducers in various transmembrane signaling systems. The polypeptide is Guanine nucleotide-binding protein G(q) subunit alpha (Homarus americanus (American lobster)).